The sequence spans 783 residues: Serine/threonine-protein kinase SIK1 (783 aa).

Positions 27–278 (YDIERTLGKG…IAQIRQHRWM (252 aa)) constitute a Protein kinase domain. ATP contacts are provided by residues 33–41 (LGKGNFAVV) and Lys-56. Residue Asp-149 is the Proton acceptor of the active site. Thr-182 is modified (phosphothreonine; by LKB1 and GSK3-beta). The residue at position 186 (Ser-186) is a Phosphoserine; by autocatalysis. Residues 303–343 (DYDEQALGIMQTLGVDRQRTVESLQNSSYNHFAAIYYLLLE) form the UBA domain. Phosphothreonine; by CaMK1 is present on Thr-322. Disordered regions lie at residues 353–377 (CARP…VPQE) and 449–477 (RQGP…LAEV). A Phosphothreonine; by PKA modification is found at Thr-473. Phosphoserine; by PKA is present on Ser-575. The RK-rich region; required for cAMP responsiveness and nuclear localization stretch occupies residues 583-612 (LKAFRQQLRKTTRTKGFLGLNKIKGLARQV). The disordered stretch occupies residues 619 to 643 (RASRGGLSPFHAPAQSPGLHGGAAG).

This sequence belongs to the protein kinase superfamily. CAMK Ser/Thr protein kinase family. AMPK subfamily. In terms of assembly, interacts with ATP1A1. Interacts (when phosphorylated on Thr-182 and Ser-186) with YWHAZ. Interacts (when phosphorylated at Thr-473 and/or Ser-575) with 14-3-3 proteins; the interaction inhibits kinase activity towards TORCs. There is a cooperative effect of the phosphorylation sites in 14-3-3 binding as the interaction is stronger when both Thr-473 and Ser-575 are modified. Mg(2+) serves as cofactor. In terms of processing, phosphorylated at Thr-182 by STK11/LKB1 in complex with STE20-related adapter-alpha (STRADA) pseudo kinase and CAB39, leading to its activation. Phosphorylation at Thr-182 promotes autophosphorylation at Ser-186, which is required for sustained activity. Autophosphorylation at Ser-186 is maintained by sequential phosphorylation at Thr-182 by GSK3-beta. GSK3-beta cannot initiate phosphorylation at Thr-182, it can only maintain it. Phosphorylation at Ser-575 in response to cAMP signaling promotes translocation to the cytoplasm. Phosphorylation at Thr-322 by CaMK1 following intracellular sodium concentration leads to activation.

Its subcellular location is the cytoplasm. It localises to the nucleus. The catalysed reaction is L-seryl-[protein] + ATP = O-phospho-L-seryl-[protein] + ADP + H(+). The enzyme catalyses L-threonyl-[protein] + ATP = O-phospho-L-threonyl-[protein] + ADP + H(+). Its activity is regulated as follows. Activated by phosphorylation on Thr-182. Also activated by phosphorylation on Thr-322 in response to increases in intracellular sodium in parallel with elevations in intracellular calcium through the reversible sodium/calcium exchanger. Inhibited by phosphorylation at Thr-473 and Ser-575, probably by PKA, which triggers interaction with 14-3-3 proteins. Its function is as follows. Serine/threonine-protein kinase involved in various processes such as cell cycle regulation, gluconeogenesis and lipogenesis regulation, muscle growth and differentiation and tumor suppression. Phosphorylates HDAC4, HDAC5, PPME1, SREBF1, CRTC1/TORC1. Inhibits CREB activity by phosphorylating and inhibiting activity of TORCs, the CREB-specific coactivators, like CRTC2/TORC2 and CRTC3/TORC3 in response to cAMP signaling. Acts as a tumor suppressor and plays a key role in p53/TP53-dependent anoikis, a type of apoptosis triggered by cell detachment: required for phosphorylation of p53/TP53 in response to loss of adhesion and is able to suppress metastasis. Part of a sodium-sensing signaling network, probably by mediating phosphorylation of PPME1: following increases in intracellular sodium, SIK1 is activated by CaMK1 and phosphorylates PPME1 subunit of protein phosphatase 2A (PP2A), leading to dephosphorylation of sodium/potassium-transporting ATPase ATP1A1 and subsequent increase activity of ATP1A1. Acts as a regulator of muscle cells by phosphorylating and inhibiting class II histone deacetylases HDAC4 and HDAC5, leading to promote expression of MEF2 target genes in myocytes. Also required during cardiomyogenesis by regulating the exit of cardiomyoblasts from the cell cycle via down-regulation of CDKN1C/p57Kip2. Acts as a regulator of hepatic gluconeogenesis by phosphorylating and repressing the CREB-specific coactivators CRTC1/TORC1 and CRTC2/TORC2, leading to inhibit CREB activity. Also regulates hepatic lipogenesis by phosphorylating and inhibiting SREBF1. In concert with CRTC1/TORC1, regulates the light-induced entrainment of the circadian clock by attenuating PER1 induction; represses CREB-mediated transcription of PER1 by phosphorylating and deactivating CRTC1/TORC1. In Homo sapiens (Human), this protein is Serine/threonine-protein kinase SIK1 (SIK1).